We begin with the raw amino-acid sequence, 168 residues long: Segregation and condensation protein B (168 aa).

It belongs to the ScpB family. Homodimer. Homodimerization may be required to stabilize the binding of ScpA to the Smc head domains. Component of a cohesin-like complex composed of ScpA, ScpB and the Smc homodimer, in which ScpA and ScpB bind to the head domain of Smc. The presence of the three proteins is required for the association of the complex with DNA.

It localises to the cytoplasm. Participates in chromosomal partition during cell division. May act via the formation of a condensin-like complex containing Smc and ScpA that pull DNA away from mid-cell into both cell halves. This is Segregation and condensation protein B from Caldanaerobacter subterraneus subsp. tengcongensis (strain DSM 15242 / JCM 11007 / NBRC 100824 / MB4) (Thermoanaerobacter tengcongensis).